Consider the following 180-residue polypeptide: Colicin-E5 (180 aa).

Disordered stretches follow at residues 24 to 143 (AQTD…GSPG) and 155 to 180 (VTQISDKTDPGWVDDSRIQWGNKNDQ). Basic and acidic residues predominate over residues 54 to 76 (ESRKKKEDNKRDAEGKLNDELAK). Positions 74–180 (LAKNKGKIPG…RIQWGNKNDQ (107 aa)) are nuclease. Residues 106–116 (NTVSNGATGTS) are compositionally biased toward polar residues. Residues 160 to 171 (DKTDPGWVDDSR) show a composition bias toward basic and acidic residues.

The protein belongs to the colicin/pyosin nuclease family.

Colicins are polypeptide toxins produced by and active against E.coli and closely related bacteria. This colicin is an endonuclease. The protein is Colicin-E5 (col) of Escherichia coli.